The chain runs to 665 residues: DNA ligase (665 aa).

NAD(+) is bound by residues 31–35 (DKEFD), 80–81 (SL), and E110. K112 acts as the N6-AMP-lysine intermediate in catalysis. Residues R133, E170, K285, and K309 each coordinate NAD(+). Zn(2+)-binding residues include C403, C406, C421, and C427. Residues 587–665 (GHTDKLAGQS…NEEEFLKLIS (79 aa)) enclose the BRCT domain.

Belongs to the NAD-dependent DNA ligase family. LigA subfamily. Requires Mg(2+) as cofactor. Mn(2+) serves as cofactor.

The catalysed reaction is NAD(+) + (deoxyribonucleotide)n-3'-hydroxyl + 5'-phospho-(deoxyribonucleotide)m = (deoxyribonucleotide)n+m + AMP + beta-nicotinamide D-nucleotide.. In terms of biological role, DNA ligase that catalyzes the formation of phosphodiester linkages between 5'-phosphoryl and 3'-hydroxyl groups in double-stranded DNA using NAD as a coenzyme and as the energy source for the reaction. It is essential for DNA replication and repair of damaged DNA. The protein is DNA ligase of Bacteroides fragilis (strain ATCC 25285 / DSM 2151 / CCUG 4856 / JCM 11019 / LMG 10263 / NCTC 9343 / Onslow / VPI 2553 / EN-2).